The chain runs to 312 residues: MIEFEKPNITKIDENKDYGKFVVEPLERGYGTTLGNSLRRVLLASLPGAAVTSINIEGVLHEFDTIPGVREDVMQIILNIKGIAVKSYVQDEKMIELDVEGPAEITAGDILTDSDIEIVNPDHYLFTIGEGARFKAVMTVNSGRGYVPADQNKRDDAPVGTLAVDSIYTPVTKVNYQVEPARVGSNDGFDKLTLEIMTNGTIIPEDALGLSARILTEHLDLFTDLTEVAKATDVMKEVDKSSDDHVLERTIEELDLSVRSYNCLKRAGINTVYDLTEKTEPEMMKVRNLGRKSLEEVKIKLTDLGLGLKNDK.

Residues Met-1–Thr-226 are alpha N-terminal domain (alpha-NTD). Residues Asp-244–Lys-312 are alpha C-terminal domain (alpha-CTD).

This sequence belongs to the RNA polymerase alpha chain family. In terms of assembly, homodimer. The RNAP catalytic core consists of 2 alpha, 1 beta, 1 beta' and 1 omega subunit. When a sigma factor is associated with the core the holoenzyme is formed, which can initiate transcription.

The catalysed reaction is RNA(n) + a ribonucleoside 5'-triphosphate = RNA(n+1) + diphosphate. Functionally, DNA-dependent RNA polymerase catalyzes the transcription of DNA into RNA using the four ribonucleoside triphosphates as substrates. The chain is DNA-directed RNA polymerase subunit alpha from Streptococcus gordonii (strain Challis / ATCC 35105 / BCRC 15272 / CH1 / DL1 / V288).